We begin with the raw amino-acid sequence, 515 residues long: N-acetylglucosamine-1-phosphodiester alpha-N-acetylglucosaminidase (515 aa).

An N-terminal signal peptide occupies residues 1–25 (MATSTGRWLLLRLALFGFLWEASGG). A propeptide spans 26-49 (LDSGASRDDDLLLPYPRARARLPR) (removed in mature form). Residues 50–448 (DCTRVRAGNR…AGELSFFTRT (399 aa)) are Lumenal-facing. Intrachain disulfides connect cysteine 115–cysteine 148, cysteine 132–cysteine 323, cysteine 307–cysteine 314, cysteine 362–cysteine 373, and cysteine 380–cysteine 389. Asparagine 208, asparagine 214, and asparagine 296 each carry an N-linked (GlcNAc...) asparagine glycan. The EGF-like domain maps to 358 to 390 (DELDCGPSNCSQHGLCTETGCRCDAGWTGSNCS). N-linked (GlcNAc...) asparagine glycans are attached at residues asparagine 366, asparagine 388, and asparagine 420. A helical transmembrane segment spans residues 449–469 (AWLALTLALAFLLLISTAANL). The Cytoplasmic segment spans residues 470–515 (SLLLSRAERNRRLHGDYAYHPLQEMNGEPLAAEKEQPGGAHNPFKD). Residues 486–493 (YAYHPLQE) form a mediates the interaction with AP4M1 region. Positions 488–491 (YHPL) match the Tyrosine-based internalization motif motif. Positions 511 to 515 (NPFKD) match the NPF internalization motif motif.

As to quaternary structure, homotetramer arranged as two disulfide-linked homodimers. Interacts with AP4M1. In terms of processing, the precursor is cleaved and activated in the trans-Golgi network by a furin endopeptidase. As to expression, isoform 2 may be brain-specific.

Its subcellular location is the golgi apparatus. The protein resides in the golgi stack membrane. The protein localises to the trans-Golgi network. The catalysed reaction is N(4)-[6-(N-acetyl-alpha-D-glucosaminyl-1-phospho)-alpha-D-mannosyl-(1-&gt;2)-alpha-D-mannosyl-(glycan)]-L-asparaginyl-[protein] + H2O = N(4)-[6-phospho-alpha-D-mannosyl-(1-&gt;2)-alpha-D-mannosyl-(glycan)]-L-asparaginyl-[protein] + N-acetyl-D-glucosamine + H(+). The protein operates within protein modification; protein glycosylation. Its function is as follows. Catalyzes the second step in the formation of the mannose 6-phosphate targeting signal on lysosomal enzyme oligosaccharides by removing GlcNAc residues from GlcNAc-alpha-P-mannose moieties, which are formed in the first step. Also hydrolyzes UDP-GlcNAc, a sugar donor for Golgi N-acetylglucosaminyltransferases. The chain is N-acetylglucosamine-1-phosphodiester alpha-N-acetylglucosaminidase (NAGPA) from Homo sapiens (Human).